We begin with the raw amino-acid sequence, 118 residues long: V-type proton ATPase subunit G 3 (118 aa).

Residues 3 to 54 are a coiled coil; the sequence is SQSQGIQQLLQAEKRAKDKLEEAKKRKNKRLRQAKEEATADIDQYRLKREAD. Residues 19 to 39 form a disordered region; sequence KDKLEEAKKRKNKRLRQAKEE.

It belongs to the V-ATPase G subunit family. V-ATPase is a heteromultimeric enzyme made up of two complexes: the ATP-hydrolytic V1 complex and the proton translocation V0 complex. The V1 complex consists of three catalytic AB heterodimers that form a heterohexamer, three peripheral stalks each consisting of EG heterodimers, one central rotor including subunits D and F, and the regulatory subunits C and H. The proton translocation complex V0 consists of the proton transport subunit a, a ring of proteolipid subunits c9c'', rotary subunit d, subunits e and f, and two accessory subunits.

Functionally, subunit of the V1 complex of vacuolar(H+)-ATPase (V-ATPase), a multisubunit enzyme composed of a peripheral complex (V1) that hydrolyzes ATP and a membrane integral complex (V0) that translocates protons. V-ATPase is responsible for acidifying and maintaining the pH of intracellular compartments and in some cell types, is targeted to the plasma membrane, where it is responsible for acidifying the extracellular environment. In Xenopus laevis (African clawed frog), this protein is V-type proton ATPase subunit G 3 (atp6v1g3).